Reading from the N-terminus, the 257-residue chain is Pyridoxine 5'-phosphate synthase (257 aa).

3-amino-2-oxopropyl phosphate is bound at residue Asn6. 8 to 9 (DH) is a binding site for 1-deoxy-D-xylulose 5-phosphate. Arg17 is a 3-amino-2-oxopropyl phosphate binding site. His41 acts as the Proton acceptor in catalysis. Positions 43 and 48 each coordinate 1-deoxy-D-xylulose 5-phosphate. Residue Glu68 is the Proton acceptor of the active site. Thr98 contributes to the 1-deoxy-D-xylulose 5-phosphate binding site. His210 functions as the Proton donor in the catalytic mechanism. 3-amino-2-oxopropyl phosphate contacts are provided by residues Gly211 and 232–233 (GQ).

The protein belongs to the PNP synthase family. In terms of assembly, homooctamer; tetramer of dimers.

It localises to the cytoplasm. The enzyme catalyses 3-amino-2-oxopropyl phosphate + 1-deoxy-D-xylulose 5-phosphate = pyridoxine 5'-phosphate + phosphate + 2 H2O + H(+). It functions in the pathway cofactor biosynthesis; pyridoxine 5'-phosphate biosynthesis; pyridoxine 5'-phosphate from D-erythrose 4-phosphate: step 5/5. Functionally, catalyzes the complicated ring closure reaction between the two acyclic compounds 1-deoxy-D-xylulose-5-phosphate (DXP) and 3-amino-2-oxopropyl phosphate (1-amino-acetone-3-phosphate or AAP) to form pyridoxine 5'-phosphate (PNP) and inorganic phosphate. This chain is Pyridoxine 5'-phosphate synthase, found in Campylobacter jejuni (strain RM1221).